The following is an 873-amino-acid chain: Aminopeptidase M1-D (873 aa).

The interval 96–203 is required for membrane association; that stretch reads LGEGVLAMRF…MSTYLVAIVV (108 aa). Substrate is bound by residues Glu-136 and 269–273; that span reads GAMEN. Zn(2+) is bound at residue His-305. The active-site Proton acceptor is Glu-306. Zn(2+) contacts are provided by His-309 and Glu-328. A Dileucine internalization motif motif is present at residues 721–722; the sequence is LL.

The protein belongs to the peptidase M1 family. As to quaternary structure, homodimer. Zn(2+) is required as a cofactor.

The protein localises to the membrane. It localises to the microsome membrane. It is found in the cytoplasm. The catalysed reaction is Release of an N-terminal amino acid, Xaa-|-Yaa- from a peptide, amide or arylamide. Xaa is preferably Ala, but may be most amino acids including Pro (slow action). When a terminal hydrophobic residue is followed by a prolyl residue, the two may be released as an intact Xaa-Pro dipeptide.. In Oryza sativa subsp. japonica (Rice), this protein is Aminopeptidase M1-D.